The following is a 109-amino-acid chain: Large ribosomal subunit protein uL22 (109 aa).

It belongs to the universal ribosomal protein uL22 family. Part of the 50S ribosomal subunit.

Functionally, this protein binds specifically to 23S rRNA; its binding is stimulated by other ribosomal proteins, e.g. L4, L17, and L20. It is important during the early stages of 50S assembly. It makes multiple contacts with different domains of the 23S rRNA in the assembled 50S subunit and ribosome. Its function is as follows. The globular domain of the protein is located near the polypeptide exit tunnel on the outside of the subunit, while an extended beta-hairpin is found that lines the wall of the exit tunnel in the center of the 70S ribosome. This Polaromonas naphthalenivorans (strain CJ2) protein is Large ribosomal subunit protein uL22.